A 192-amino-acid chain; its full sequence is CASP-like protein 2U1 (192 aa).

Residues 1–11 (MASRKQGAREG) lie on the Cytoplasmic side of the membrane. A helical transmembrane segment spans residues 12–32 (LWSMGVRLLTTLLCITSLILL). The Extracellular segment spans residues 33–58 (LKAKQTVRRALGLGYIAQTVKYSDTS). Residues 59 to 79 (GFIYLVYINILVAAYGLIVFV) form a helical membrane-spanning segment. Residues 80–96 (SLIPSALGKSCSGKCSR) are Cytoplasmic-facing. The helical transmembrane segment at 97–117 (WTIFVLDQVFAYVLLSAVSAA) threads the bilayer. Residues 118–145 (TEVLYLADKGMSKTQWEALCPTYGFFCH) lie on the Extracellular side of the membrane. The helical transmembrane segment at 146-166 (MVSASVAIGSVAVVLLAVLSV) threads the bilayer. Residues 167–192 (SSAQSLFHNFYTRALYTTKMRHSSLT) lie on the Cytoplasmic side of the membrane.

The protein belongs to the Casparian strip membrane proteins (CASP) family. Homodimer and heterodimers.

The protein localises to the cell membrane. This is CASP-like protein 2U1 from Adiantum capillus-veneris (Maidenhair fern).